The chain runs to 1009 residues: MSWMFKRDPVWKYLQTVQYGVHGNFPRLSYPTFFPRFEFQDVIPPDDFLTSDEEVDSVLFGSLRGHVVGLRYYTGVVNNNEMVALQRDPNNPYDKNAIKVNNVNGNQVGHLKKELAGALAYIMDNKLAQIEGVVPFGANNAFTMPLHMTFWGKEENRKAVSDQLKKHGFKLGPAPKTLGFNLESGWGSGRAGPSYSMPVHAAVQMTTEQLKTEFDKLFEDLKEDDKTHEMEPAEAIETPLLPHQKQALAWMVSRENSKELPPFWEQRNDLYYNTITNFSEKDRPENVHGGILADDMGLGKTLTAIAVILTNFHDGRPLPIERVKKNLLKKEYNVNDDSMKLGGNNTSEKADGLSKDASRCSEQPSISDIKEKSKFRMSELSSSRPKRRKTAVQYIESSDSEEIETSELPQKMKGKLKNVQSETKGRAKAGSSKVIEDVAFACALTSSVPTTKKKMLKKGACAVEGSKKTDVEERPRTTLIICPLSVLSNWIDQFGQHIKSDVHLNFYVYYGPDRIREPALLSKQDIVLTTYNILTHDYGTKGDSPLHSIRWLRVILDEGHAIRNPNAQQTKAVLDLESERRWVLTGTPIQNSLKDLWSLLSFLKLKPFIDREWWHRTIQRPVTMGDEGGLRRLQSLIKNITLRRTKTSKIKGKPVLELPERKVFIQHITLSDEERKIYQSVKNEGRATIGRYFNEGTVLAHYADVLGLLLRLRQICCHTYLLTNAVSSNGPSGNDTPEELRKKLIRKMKLILSSGSDEECAICLDSLTVPVITHCAHVFCKPCICQVIQNEQPHAKCPLCRNDIHEDNLLECPPEELARDSEKKSDMEWTSSSKINALMHALTDLRKKNPNIKSLVVSQFTTFLSLIEIPLKASGFVFTRLDGSMAQKKRVESIQCFQNTEAGSPTIMLLSLKAGGVGLNLSAASRVFLMDPAWNPAAEDQCFDRCHRLGQKQEVIITKFIVKDSVEENMLKIQNKKRELAAGAFGTKKPNADEMKQAKINEIRTLIDL.

R27 is modified (omega-N-methylarginine). Residues 38–287 mediate DNA binding; sequence EFQDVIPPDD…FSEKDRPENV (250 aa). A Glycyl lysine isopeptide (Lys-Gly) (interchain with G-Cter in SUMO2) cross-link involves residue K112. Y195 carries the post-translational modification Phosphotyrosine; by JAK2. K211 participates in a covalent cross-link: Glycyl lysine isopeptide (Lys-Gly) (interchain with G-Cter in SUMO2). 294 to 301 serves as a coordination point for ATP; sequence DDMGLGKT. The interval 336-365 is disordered; the sequence is DDSMKLGGNNTSEKADGLSKDASRCSEQPS. Positions 348–359 are enriched in basic and acidic residues; it reads EKADGLSKDASR. Phosphoserine is present on residues S397, S398, and S400. Residues 435 to 606 enclose the Helicase ATP-binding domain; sequence IEDVAFACAL…WSLLSFLKLK (172 aa). A DEGH box motif is present at residues 557-560; sequence DEGH. A Phosphothreonine modification is found at T736. The RING-type zinc-finger motif lies at 760–801; that stretch reads CAICLDSLTVPVITHCAHVFCKPCICQVIQNEQPHAKCPLCR. The Helicase C-terminal domain occupies 837 to 996; it reads ALMHALTDLR…TKKPNADEMK (160 aa). The tract at residues 925 to 1009 is interaction with SP1 and SP3; sequence SRVFLMDPAW…INEIRTLIDL (85 aa).

Belongs to the SNF2/RAD54 helicase family. RAD16 subfamily. In terms of assembly, interacts with SP1 and SP3 independently of DNA; the interaction with these transcriptional factors may be required for basal transcription of target genes. Interacts with EGR1; the interaction requires prior binding to DNA and represses c-Rel via a DNA looping mechanism. Interacts with GATA4. Interacts with PCNA; the interaction promotes polyubiquitination of PCNA through association with the UBE2B-RAD18 and UBE2V2-UBE2N ubiquitin ligase complexes. Interacts with RAD18, SHPRH, UBE2V2 and UBE2N. As to expression, expressed in brain, heart, kidney, liver, lung, pancreas, placenta and skeletal muscle.

It is found in the cytoplasm. The protein resides in the nucleus. Its subcellular location is the nucleolus. It localises to the nucleoplasm. The catalysed reaction is S-ubiquitinyl-[E2 ubiquitin-conjugating enzyme]-L-cysteine + [acceptor protein]-L-lysine = [E2 ubiquitin-conjugating enzyme]-L-cysteine + N(6)-ubiquitinyl-[acceptor protein]-L-lysine.. The protein operates within protein modification; protein ubiquitination. In terms of biological role, has both helicase and E3 ubiquitin ligase activities. Possesses intrinsic ATP-dependent nucleosome-remodeling activity; This activity may be required for transcriptional activation or repression of specific target promoters. These may include the SERPINE1 and HIV-1 promoters and the SV40 enhancer, to which this protein can bind directly. Plays a role in error-free postreplication repair (PRR) of damaged DNA and maintains genomic stability through acting as a ubiquitin ligase for 'Lys-63'-linked polyubiquitination of chromatin-bound PCNA. The chain is Helicase-like transcription factor (HLTF) from Homo sapiens (Human).